The following is a 357-amino-acid chain: UDP-N-acetylglucosamine--N-acetylmuramyl-(pentapeptide) pyrophosphoryl-undecaprenol N-acetylglucosamine transferase (357 aa).

UDP-N-acetyl-alpha-D-glucosamine is bound by residues 15-17, N123, R164, S190, and Q284; that span reads TGG.

This sequence belongs to the glycosyltransferase 28 family. MurG subfamily.

The protein resides in the cell inner membrane. The enzyme catalyses di-trans,octa-cis-undecaprenyl diphospho-N-acetyl-alpha-D-muramoyl-L-alanyl-D-glutamyl-meso-2,6-diaminopimeloyl-D-alanyl-D-alanine + UDP-N-acetyl-alpha-D-glucosamine = di-trans,octa-cis-undecaprenyl diphospho-[N-acetyl-alpha-D-glucosaminyl-(1-&gt;4)]-N-acetyl-alpha-D-muramoyl-L-alanyl-D-glutamyl-meso-2,6-diaminopimeloyl-D-alanyl-D-alanine + UDP + H(+). Its pathway is cell wall biogenesis; peptidoglycan biosynthesis. In terms of biological role, cell wall formation. Catalyzes the transfer of a GlcNAc subunit on undecaprenyl-pyrophosphoryl-MurNAc-pentapeptide (lipid intermediate I) to form undecaprenyl-pyrophosphoryl-MurNAc-(pentapeptide)GlcNAc (lipid intermediate II). The protein is UDP-N-acetylglucosamine--N-acetylmuramyl-(pentapeptide) pyrophosphoryl-undecaprenol N-acetylglucosamine transferase of Synechococcus elongatus (strain ATCC 33912 / PCC 7942 / FACHB-805) (Anacystis nidulans R2).